We begin with the raw amino-acid sequence, 89 residues long: Protein FAM25A (89 aa).

This sequence belongs to the FAM25 family.

The protein is Protein FAM25A of Homo sapiens (Human).